A 456-amino-acid polypeptide reads, in one-letter code: Bifunctional protein GlmU (456 aa).

Residues 1–229 (MLNSAMSVVI…ISETDGVNNR (229 aa)) are pyrophosphorylase. UDP-N-acetyl-alpha-D-glucosamine-binding positions include 11 to 14 (LAAG), Lys25, Gln76, 81 to 82 (GT), 103 to 105 (YGD), Gly140, Glu154, Asn169, and Asn227. Asp105 is a Mg(2+) binding site. Residue Asn227 coordinates Mg(2+). Residues 230-250 (LQLSRLERIYQAEQAEKLLLS) form a linker region. The interval 251–456 (GVMLRDPARF…QGWQRPVKKK (206 aa)) is N-acetyltransferase. Residues Arg333 and Lys351 each coordinate UDP-N-acetyl-alpha-D-glucosamine. The active-site Proton acceptor is the His363. UDP-N-acetyl-alpha-D-glucosamine is bound by residues Tyr366 and Asn377. Acetyl-CoA contacts are provided by residues Ala380, 386–387 (NY), Ser405, Ala423, and Arg440.

The protein in the N-terminal section; belongs to the N-acetylglucosamine-1-phosphate uridyltransferase family. This sequence in the C-terminal section; belongs to the transferase hexapeptide repeat family. Homotrimer. It depends on Mg(2+) as a cofactor.

It localises to the cytoplasm. It carries out the reaction alpha-D-glucosamine 1-phosphate + acetyl-CoA = N-acetyl-alpha-D-glucosamine 1-phosphate + CoA + H(+). The enzyme catalyses N-acetyl-alpha-D-glucosamine 1-phosphate + UTP + H(+) = UDP-N-acetyl-alpha-D-glucosamine + diphosphate. The protein operates within nucleotide-sugar biosynthesis; UDP-N-acetyl-alpha-D-glucosamine biosynthesis; N-acetyl-alpha-D-glucosamine 1-phosphate from alpha-D-glucosamine 6-phosphate (route II): step 2/2. Its pathway is nucleotide-sugar biosynthesis; UDP-N-acetyl-alpha-D-glucosamine biosynthesis; UDP-N-acetyl-alpha-D-glucosamine from N-acetyl-alpha-D-glucosamine 1-phosphate: step 1/1. It participates in bacterial outer membrane biogenesis; LPS lipid A biosynthesis. Functionally, catalyzes the last two sequential reactions in the de novo biosynthetic pathway for UDP-N-acetylglucosamine (UDP-GlcNAc). The C-terminal domain catalyzes the transfer of acetyl group from acetyl coenzyme A to glucosamine-1-phosphate (GlcN-1-P) to produce N-acetylglucosamine-1-phosphate (GlcNAc-1-P), which is converted into UDP-GlcNAc by the transfer of uridine 5-monophosphate (from uridine 5-triphosphate), a reaction catalyzed by the N-terminal domain. The chain is Bifunctional protein GlmU from Salmonella heidelberg (strain SL476).